The sequence spans 218 residues: Thiopurine S-methyltransferase (218 aa).

S-adenosyl-L-methionine is bound by residues tryptophan 10, leucine 45, glutamate 66, and arginine 123.

It belongs to the class I-like SAM-binding methyltransferase superfamily. TPMT family.

The protein localises to the cytoplasm. The enzyme catalyses S-adenosyl-L-methionine + a thiopurine = S-adenosyl-L-homocysteine + a thiopurine S-methylether.. The polypeptide is Thiopurine S-methyltransferase (Xanthomonas axonopodis pv. citri (strain 306)).